The primary structure comprises 363 residues: Biotin synthase (363 aa).

One can recognise a Radical SAM core domain in the interval 40–268; it reads NVVQVSTLLS…ETQVRLSAGR (229 aa). [4Fe-4S] cluster is bound by residues Cys55, Cys59, and Cys62. Residues Cys99, Cys131, Cys191, and Arg263 each coordinate [2Fe-2S] cluster.

It belongs to the radical SAM superfamily. Biotin synthase family. In terms of assembly, homodimer. [4Fe-4S] cluster serves as cofactor. [2Fe-2S] cluster is required as a cofactor.

The catalysed reaction is (4R,5S)-dethiobiotin + (sulfur carrier)-SH + 2 reduced [2Fe-2S]-[ferredoxin] + 2 S-adenosyl-L-methionine = (sulfur carrier)-H + biotin + 2 5'-deoxyadenosine + 2 L-methionine + 2 oxidized [2Fe-2S]-[ferredoxin]. It functions in the pathway cofactor biosynthesis; biotin biosynthesis; biotin from 7,8-diaminononanoate: step 2/2. In terms of biological role, catalyzes the conversion of dethiobiotin (DTB) to biotin by the insertion of a sulfur atom into dethiobiotin via a radical-based mechanism. The polypeptide is Biotin synthase (Flavobacterium johnsoniae (strain ATCC 17061 / DSM 2064 / JCM 8514 / BCRC 14874 / CCUG 350202 / NBRC 14942 / NCIMB 11054 / UW101) (Cytophaga johnsonae)).